The sequence spans 507 residues: Extracellular elastase (507 aa).

The N-terminal stretch at 1–28 is a signal peptide; it reads MKNFSKFALTSIAALTVASPLVNTEVDA. Residues 29–207 constitute a propeptide that is removed on maturation; the sequence is KDKVSATQNI…VVDKLNMIKE (179 aa). D347 is a Ca(2+) binding site. H351 lines the Zn(2+) pocket. E352 is an active-site residue. Residues H355 and E375 each contribute to the Zn(2+) site. 9 residues coordinate Ca(2+): D386, E388, D389, L391, E394, Y397, T398, V401, and D404. The Proton donor role is filled by H435.

It belongs to the peptidase M4 family. The cofactor is Ca(2+). It depends on Zn(2+) as a cofactor.

The protein localises to the secreted. In terms of biological role, protease that has a low substrate specificity. Glucagon is preferentially cleaved between aromatic (Phe) and hydrophobic (Val) amino acids. Hydrolyzes casein and elastin. The polypeptide is Extracellular elastase (sepA) (Staphylococcus epidermidis (strain ATCC 12228 / FDA PCI 1200)).